We begin with the raw amino-acid sequence, 145 residues long: Large ribosomal subunit protein uL13 (145 aa).

This sequence belongs to the universal ribosomal protein uL13 family. Part of the 50S ribosomal subunit.

Its function is as follows. This protein is one of the early assembly proteins of the 50S ribosomal subunit, although it is not seen to bind rRNA by itself. It is important during the early stages of 50S assembly. The polypeptide is Large ribosomal subunit protein uL13 (Halobacterium salinarum (strain ATCC 700922 / JCM 11081 / NRC-1) (Halobacterium halobium)).